A 222-amino-acid chain; its full sequence is Large ribosomal subunit protein mL64 (222 aa).

2 disordered regions span residues 19–46 (APGS…EDLL) and 188–222 (KRLK…APSS). The span at 25–36 (YRARPPPRRRPG) shows a compositional bias: basic residues. A coiled-coil region spans residues 99-212 (MQESLRVKQL…AAALAAAVAQ (114 aa)). The Nuclear localization signal motif lies at 184–200 (KKERKRLKEEKQKRKKE). The segment covering 203 to 212 (AAALAAAVAQ) has biased composition (low complexity).

This sequence belongs to the mitochondrion-specific ribosomal protein mL64 family. As to quaternary structure, component of the mitochondrial large ribosomal subunit (mt-LSU). Mature mammalian 55S mitochondrial ribosomes consist of a small (28S) and a large (39S) subunit. The 28S small subunit contains a 12S ribosomal RNA (12S mt-rRNA) and 30 different proteins. The 39S large subunit contains a 16S rRNA (16S mt-rRNA), a copy of mitochondrial valine transfer RNA (mt-tRNA(Val)), which plays an integral structural role, and 52 different proteins. Interacts with GADD45A, GADD45B and GADD45G. Interacts with NR4A1 via the NR4A1 AB domain. Interacts with ATAD3A and ATAD3B. (Microbial infection) Interacts with the human papilloma virus type 16 (HPV 16) minor capsid protein L2. As to expression, widely expressed. Highly expressed in the thyroid gland, heart, lymph nodes, trachea and adrenal tissues. Expressed at lower level in liver skeletal muscle, kidney, pancreas, testis, ovary and stomach. Barely detectable in adrenal adenoma and papillary thyroid cancer.

Its subcellular location is the mitochondrion. The protein resides in the nucleus. Acts as a negative regulator of G1 to S cell cycle phase progression by inhibiting cyclin-dependent kinases. Inhibitory effects are additive with GADD45 proteins but also occur in the absence of GADD45 proteins. Acts as a repressor of the orphan nuclear receptor NR4A1 by inhibiting AB domain-mediated transcriptional activity. May be involved in the hormone-mediated regulation of NR4A1 transcriptional activity. May play a role in mitochondrial protein synthesis. This is Large ribosomal subunit protein mL64 (GADD45GIP1) from Homo sapiens (Human).